Reading from the N-terminus, the 376-residue chain is 23S rRNA (uracil(747)-C(5))-methyltransferase RlmC (376 aa).

[4Fe-4S] cluster is bound by residues cysteine 3, cysteine 11, cysteine 14, and cysteine 87. The S-adenosyl-L-methionine site is built by glutamine 212, phenylalanine 241, glutamate 262, and asparagine 307. Cysteine 334 (nucleophile) is an active-site residue.

The protein belongs to the class I-like SAM-binding methyltransferase superfamily. RNA M5U methyltransferase family. RlmC subfamily.

The enzyme catalyses uridine(747) in 23S rRNA + S-adenosyl-L-methionine = 5-methyluridine(747) in 23S rRNA + S-adenosyl-L-homocysteine + H(+). In terms of biological role, catalyzes the formation of 5-methyl-uridine at position 747 (m5U747) in 23S rRNA. The polypeptide is 23S rRNA (uracil(747)-C(5))-methyltransferase RlmC (Yersinia pseudotuberculosis serotype I (strain IP32953)).